The chain runs to 299 residues: Protein tantalus (299 aa).

The interval 16–100 (KDNRSPTTNS…RSSTFGARAG (85 aa)) is disordered. Over residues 20–35 (SPTTNSNLSWQLNQMA) the composition is skewed to polar residues. Over residues 53-69 (ESDDNVSSESHDSDDVD) the composition is skewed to acidic residues. Residues 84–93 (CISGSSRRSS) show a composition bias toward low complexity. Serine 204 and serine 264 each carry phosphoserine.

As to quaternary structure, binds to DNA in vitro. Interacts directly with Asx. As to expression, ubiquitously expressed in precellularized embryos. Then it decreases at cellular blastoderm to increase again during germ band extension. During germ band extension, it is highly expressed in somatic and visceral mesoderm. Ubiquitously expressed in imaginal disks. In ovary, it is expressed from stage 10.

It localises to the nucleus. Its subcellular location is the cytoplasm. It is found in the chromosome. Its function is as follows. Potential cofactor involved in sensory organ development. Despite its interaction with the Polycomb group protein Asx, it does not regulate the expression of homeotic genes. This is Protein tantalus from Drosophila melanogaster (Fruit fly).